Consider the following 119-residue polypeptide: Fluoride-specific ion channel FluC (119 aa).

A run of 4 helical transmembrane segments spans residues 5 to 25, 34 to 54, 59 to 79, and 97 to 117; these read IIPLSIGAALGATARWLLNLA, TGNLFANWTGALLIGIFAETI, WKLLLITGFLGSLTTLSGFSL, and IFLHTAGSLLLTWLGLKIGAA. Residues Gly69 and Thr72 each contribute to the Na(+) site.

It belongs to the fluoride channel Fluc/FEX (TC 1.A.43) family.

The protein localises to the cell inner membrane. It catalyses the reaction fluoride(in) = fluoride(out). Its activity is regulated as follows. Na(+) is not transported, but it plays an essential structural role and its presence is essential for fluoride channel function. Fluoride-specific ion channel. Important for reducing fluoride concentration in the cell, thus reducing its toxicity. The polypeptide is Fluoride-specific ion channel FluC (Neisseria meningitidis serogroup C / serotype 2a (strain ATCC 700532 / DSM 15464 / FAM18)).